Consider the following 488-residue polypeptide: UDP-GalNAc:beta-1,3-N-acetylgalactosaminyltransferase 2 (488 aa).

Residues 1–2 (MR) are Cytoplasmic-facing. Residues 3 to 23 (HLLLLFLCPCAIGVAFHLWLF) form a helical; Signal-anchor for type II membrane protein membrane-spanning segment. 3 N-linked (GlcNAc...) asparagine glycosylation sites follow: N24, N105, and N162. At 24–488 (NFSGLFTWFP…CGNPCACEDR (465 aa)) the chain is on the lumenal side.

The protein belongs to the glycosyltransferase 31 family.

The protein localises to the golgi apparatus membrane. It is found in the endoplasmic reticulum. It catalyses the reaction 3-O-(N-acetyl-beta-D-glucosaminyl-(1-&gt;4)-alpha-D-mannosyl)-L-threonyl-[protein] + UDP-N-acetyl-alpha-D-galactosamine = 3-O-[beta-D-GalNAc-(1-&gt;3)-beta-D-GlcNAc-(1-&gt;4)-alpha-D-Man]-L-Thr-[protein] + UDP + H(+). The protein operates within protein modification; protein glycosylation. Functionally, beta-1,3-N-acetylgalactosaminyltransferase that synthesizes a unique carbohydrate structure, GalNAc-beta-1-3GlcNAc, on N- and O-glycans. Has no galactose nor galactosaminyl transferase activity toward any acceptor substrate. Involved in alpha-dystroglycan (dag1) glycosylation. This Xenopus tropicalis (Western clawed frog) protein is UDP-GalNAc:beta-1,3-N-acetylgalactosaminyltransferase 2 (b3galnt2).